The sequence spans 304 residues: D-alanine--D-alanine ligase (304 aa).

Residues 100–301 (KLVALQSGIP…FGEFLEDLIK (202 aa)) enclose the ATP-grasp domain. 129-184 (ERKLGSPFIVKPCDVGSTIGLSLVRSASEYEVALEEAFRFSDRLLLEEFIDGFEVT) contacts ATP. 3 residues coordinate Mg(2+): aspartate 256, glutamate 268, and asparagine 270.

It belongs to the D-alanine--D-alanine ligase family. Mg(2+) is required as a cofactor. The cofactor is Mn(2+).

The protein resides in the cytoplasm. The enzyme catalyses 2 D-alanine + ATP = D-alanyl-D-alanine + ADP + phosphate + H(+). It functions in the pathway cell wall biogenesis; peptidoglycan biosynthesis. Its function is as follows. Cell wall formation. The sequence is that of D-alanine--D-alanine ligase from Coprothermobacter proteolyticus (strain ATCC 35245 / DSM 5265 / OCM 4 / BT).